Consider the following 151-residue polypeptide: 3-hydroxyacyl-[acyl-carrier-protein] dehydratase FabZ (151 aa).

H54 is an active-site residue.

This sequence belongs to the thioester dehydratase family. FabZ subfamily. As to quaternary structure, oligomer. The N-terminus is blocked.

Its subcellular location is the cytoplasm. The catalysed reaction is a (3R)-hydroxyacyl-[ACP] = a (2E)-enoyl-[ACP] + H2O. In terms of biological role, involved in unsaturated fatty acids biosynthesis. Catalyzes the dehydration of short chain beta-hydroxyacyl-ACPs and long chain saturated and unsaturated beta-hydroxyacyl-ACPs. The protein is 3-hydroxyacyl-[acyl-carrier-protein] dehydratase FabZ of Escherichia coli O9:H4 (strain HS).